A 256-amino-acid polypeptide reads, in one-letter code: Undecaprenyl-diphosphatase 2 (256 aa).

8 helical membrane-spanning segments follow: residues 1–21 (MDIFNAIILGIIEGITEFLPI), 38–58 (ATATNQAFGVIIQLAAILAVL), 70–90 (LNLWIKVAIAFIPLGIIAFIF), 97–117 (LFNVPVVGVMFIVGGVIFLLL), 134–154 (VTYKQAIWIGIAQVFALIPGT), 175–195 (AEFSFLLGLPVLAAASGYDLL), 208–228 (ALAVGFVTSFIVAYFTIKLFI), and 236–256 (FVSFGIYRIVFGVILLTIAYV).

It belongs to the UppP family.

The protein localises to the cell inner membrane. The enzyme catalyses di-trans,octa-cis-undecaprenyl diphosphate + H2O = di-trans,octa-cis-undecaprenyl phosphate + phosphate + H(+). Its function is as follows. Catalyzes the dephosphorylation of undecaprenyl diphosphate (UPP). Confers resistance to bacitracin. The protein is Undecaprenyl-diphosphatase 2 of Pseudoalteromonas translucida (strain TAC 125).